The primary structure comprises 227 residues: Phosphoglycolate phosphatase (227 aa).

Aspartate 11 acts as the Nucleophile in catalysis. Residues aspartate 11 and aspartate 13 each coordinate Mg(2+). Lysine 155 contacts substrate. Positions 178 and 182 each coordinate Mg(2+).

It belongs to the archaeal SPP-like hydrolase family. Mg(2+) is required as a cofactor.

The catalysed reaction is 2-phosphoglycolate + H2O = glycolate + phosphate. In terms of biological role, catalyzes the dephosphorylation of 2-phosphoglycolate. This Haloarcula marismortui (strain ATCC 43049 / DSM 3752 / JCM 8966 / VKM B-1809) (Halobacterium marismortui) protein is Phosphoglycolate phosphatase.